The primary structure comprises 701 residues: Elongation factor G (701 aa).

The tr-type G domain maps to 11–287 (TKVRNIGIMA…AVIDYLPSPL (277 aa)). GTP is bound by residues 20–27 (AHIDAGKT), 84–88 (DTPGH), and 138–141 (NKMD).

This sequence belongs to the TRAFAC class translation factor GTPase superfamily. Classic translation factor GTPase family. EF-G/EF-2 subfamily.

It localises to the cytoplasm. Catalyzes the GTP-dependent ribosomal translocation step during translation elongation. During this step, the ribosome changes from the pre-translocational (PRE) to the post-translocational (POST) state as the newly formed A-site-bound peptidyl-tRNA and P-site-bound deacylated tRNA move to the P and E sites, respectively. Catalyzes the coordinated movement of the two tRNA molecules, the mRNA and conformational changes in the ribosome. This chain is Elongation factor G, found in Mycobacterium avium (strain 104).